We begin with the raw amino-acid sequence, 283 residues long: MAEITAALVKELRERTGAGMMECKKALVEANGDIELAIDNMRKSGQAKAAKKAGRIAAEGVIRVRIGSGFGVLVELNCETDFVAKDTGFLGLADEVADYALANKGTTIDTLATHFEDKRAALVAKIGENMTIRRVQYLEGDVIAQYLHGAKIGVLVAGSGSEEELRKVAMHVAASKPEFVNPEDVSAEVVEHERQIQIDIAINSGKPKEIAEKMVEGRMKKFTGEVSLTGQAFVMDPSVSVGDYLKSVNTSVTNFIRLEVGEGIEKVEEDFAAEVAKITGNNA.

Positions 80-83 are involved in Mg(2+) ion dislocation from EF-Tu; the sequence is TDFV.

The protein belongs to the EF-Ts family.

It is found in the cytoplasm. Its function is as follows. Associates with the EF-Tu.GDP complex and induces the exchange of GDP to GTP. It remains bound to the aminoacyl-tRNA.EF-Tu.GTP complex up to the GTP hydrolysis stage on the ribosome. The sequence is that of Elongation factor Ts from Histophilus somni (strain 129Pt) (Haemophilus somnus).